Reading from the N-terminus, the 132-residue chain is Transcription antitermination protein NusB (132 aa).

It belongs to the NusB family.

Involved in transcription antitermination. Required for transcription of ribosomal RNA (rRNA) genes. Binds specifically to the boxA antiterminator sequence of the ribosomal RNA (rrn) operons. The chain is Transcription antitermination protein NusB from Sulfurimonas denitrificans (strain ATCC 33889 / DSM 1251) (Thiomicrospira denitrificans (strain ATCC 33889 / DSM 1251)).